The following is a 156-amino-acid chain: Small ribosomal subunit protein uS7 (156 aa).

It belongs to the universal ribosomal protein uS7 family. As to quaternary structure, part of the 30S ribosomal subunit. Contacts proteins S9 and S11.

Functionally, one of the primary rRNA binding proteins, it binds directly to 16S rRNA where it nucleates assembly of the head domain of the 30S subunit. Is located at the subunit interface close to the decoding center, probably blocks exit of the E-site tRNA. The polypeptide is Small ribosomal subunit protein uS7 (Nitrosomonas eutropha (strain DSM 101675 / C91 / Nm57)).